A 160-amino-acid chain; its full sequence is Keratin-associated protein 13-4 (160 aa).

A run of 4 repeats spans residues 41 to 50, 51 to 60, 61 to 70, and 77 to 86. The segment at 41–86 is 4 X 10 AA approximate repeats; it reads CQLRSSLYRDCQKTCWEPASCQKSCYRPRTSILCCPCQTTCSGSLG.

Belongs to the PMG family. Interacts with hair keratins.

In the hair cortex, hair keratin intermediate filaments are embedded in an interfilamentous matrix, consisting of hair keratin-associated proteins (KRTAP), which are essential for the formation of a rigid and resistant hair shaft through their extensive disulfide bond cross-linking with abundant cysteine residues of hair keratins. The matrix proteins include the high-sulfur and high-glycine-tyrosine keratins. This Homo sapiens (Human) protein is Keratin-associated protein 13-4 (KRTAP13-4).